Reading from the N-terminus, the 258-residue chain is 4,5-dihydroxyphthalate decarboxylase (258 aa).

This sequence to P.testosteroni DHP decarboxylase.

The catalysed reaction is 4,5-dihydroxyphthalate + H(+) = 3,4-dihydroxybenzoate + CO2. It participates in xenobiotic degradation; phthalate degradation; 3,4-dihydroxybenzoate from phthalate: step 3/3. This is 4,5-dihydroxyphthalate decarboxylase (pht5) from Pseudomonas putida (Arthrobacter siderocapsulatus).